The sequence spans 345 residues: sn-glycerol-3-phosphate import ATP-binding protein UgpC (345 aa).

An ABC transporter domain is found at 4–235 (IQLLNIKKQY…PKTIFVADFI (232 aa)). ATP is bound at residue 37–44 (GPSGCGKS).

Belongs to the ABC transporter superfamily. sn-glycerol-3-phosphate importer (TC 3.A.1.1.3) family. As to quaternary structure, the complex is composed of two ATP-binding proteins (UgpC), two transmembrane proteins (UgpA and UgpE) and a solute-binding protein (UgpB).

It is found in the cell inner membrane. It catalyses the reaction sn-glycerol 3-phosphate(out) + ATP + H2O = sn-glycerol 3-phosphate(in) + ADP + phosphate + H(+). In terms of biological role, part of the ABC transporter complex UgpBAEC involved in sn-glycerol-3-phosphate (G3P) import. Responsible for energy coupling to the transport system. The polypeptide is sn-glycerol-3-phosphate import ATP-binding protein UgpC (Bartonella bacilliformis (strain ATCC 35685 / KC583 / Herrer 020/F12,63)).